The chain runs to 144 residues: Peroxisomal membrane protein PEX34 (144 aa).

3 helical membrane passes run 18–30 (NIWS…LDFF), 52–73 (VWLC…KLCK), and 109–131 (TAAL…RLFK).

Homooligomer. Interacts with PEX11, PEX25 and PEX27.

The protein resides in the peroxisome membrane. Functionally, in concert with the three peroxisome divisional factors, PEX11, PEX25 and PEX27, controls peroxisome morphology and abundance under conditions of peroxisome proliferation. Maintains mature peroxisomes in actively dividing cells. This is Peroxisomal membrane protein PEX34 (PEX34) from Saccharomyces cerevisiae (strain ATCC 204508 / S288c) (Baker's yeast).